Consider the following 368-residue polypeptide: Ribosomal RNA large subunit methyltransferase M (368 aa).

Residues S189, 222–225 (CPGG), D241, D261, and D278 each bind S-adenosyl-L-methionine. Catalysis depends on K307, which acts as the Proton acceptor.

The protein belongs to the class I-like SAM-binding methyltransferase superfamily. RNA methyltransferase RlmE family. RlmM subfamily. Monomer.

The protein resides in the cytoplasm. The catalysed reaction is cytidine(2498) in 23S rRNA + S-adenosyl-L-methionine = 2'-O-methylcytidine(2498) in 23S rRNA + S-adenosyl-L-homocysteine + H(+). Functionally, catalyzes the 2'-O-methylation at nucleotide C2498 in 23S rRNA. This is Ribosomal RNA large subunit methyltransferase M from Yersinia pseudotuberculosis serotype O:1b (strain IP 31758).